Reading from the N-terminus, the 328-residue chain is D-cysteine desulfhydrase (328 aa).

Lysine 51 is subject to N6-(pyridoxal phosphate)lysine.

Belongs to the ACC deaminase/D-cysteine desulfhydrase family. Homodimer. Pyridoxal 5'-phosphate is required as a cofactor.

The catalysed reaction is D-cysteine + H2O = hydrogen sulfide + pyruvate + NH4(+) + H(+). Its function is as follows. Catalyzes the alpha,beta-elimination reaction of D-cysteine and of several D-cysteine derivatives. It could be a defense mechanism against D-cysteine. This Escherichia coli (strain UTI89 / UPEC) protein is D-cysteine desulfhydrase.